The chain runs to 242 residues: NAD-dependent protein deacetylase 1 (242 aa).

The region spanning 1 to 242 (MTITSWLAAS…LNEQLAEVDP (242 aa)) is the Deacetylase sirtuin-type domain. NAD(+)-binding residues include alanine 19, threonine 23, phenylalanine 30, arginine 31, glutamine 97, valine 99, aspartate 100, and histidine 115. Phenylalanine 30 is a binding site for nicotinamide. The nicotinamide site is built by valine 99 and aspartate 100. The Proton acceptor role is filled by histidine 115. The Zn(2+) site is built by cysteine 123, cysteine 126, cysteine 142, and cysteine 144. 4 residues coordinate NAD(+): serine 182, serine 183, asparagine 207, and isoleucine 226.

The protein belongs to the sirtuin family. Class U subfamily. Zn(2+) is required as a cofactor.

It is found in the cytoplasm. The enzyme catalyses N(6)-acetyl-L-lysyl-[protein] + NAD(+) + H2O = 2''-O-acetyl-ADP-D-ribose + nicotinamide + L-lysyl-[protein]. In terms of biological role, NAD-dependent protein deacetylase which modulates the activities of several enzymes which are inactive in their acetylated form. The polypeptide is NAD-dependent protein deacetylase 1 (Geobacillus kaustophilus (strain HTA426)).